The following is an 803-amino-acid chain: Exocyst complex component 6 (803 aa).

It belongs to the SEC15 family. In terms of assembly, the exocyst complex is composed of EXOC1, EXOC2, EXOC3, EXOC4, EXOC5, EXOC6, EXOC7 and EXOC8. Interacts with CNTRL. Interacts with RAB11A in a GTP-dependent manner.

It is found in the cytoplasm. Its subcellular location is the perinuclear region. It localises to the cell projection. The protein resides in the growth cone. The protein localises to the midbody. It is found in the midbody ring. Functionally, component of the exocyst complex involved in the docking of exocytic vesicles with fusion sites on the plasma membrane. Together with RAB11A, RAB3IP, RAB8A, PARD3, PRKCI, ANXA2, CDC42 and DNMBP promotes transcytosis of PODXL to the apical membrane initiation sites (AMIS), apical surface formation and lumenogenesis. The polypeptide is Exocyst complex component 6 (EXOC6) (Canis lupus familiaris (Dog)).